The following is a 598-amino-acid chain: Nuclear receptor subfamily 4 group A member 2 (598 aa).

Positions 1–22 (MPCVQAQYGSSPQGASPASQGY) are disordered. The span at 7–18 (QYGSSPQGASPA) shows a compositional bias: polar residues. Positions 260-335 (EGLCAVCGDN…VGMVKEVVRT (76 aa)) form a DNA-binding region, nuclear receptor. NR C4-type zinc fingers lie at residues 263–283 (CAVC…CEGC) and 299–318 (CLAN…CQYC). Positions 287–314 (FKRTVQKNAKYVCLANKNCPVDKRRRNR) match the Bipartite nuclear localization signal (NLS1) motif. The interval 337-361 (SLKGRRGRLPSKPKSPQEPSPPSPP) is disordered. The Nuclear localization signal (NLS1) signature appears at 338 to 350 (LKGRRGRLPSKPK). The segment covering 352-361 (PQEPSPPSPP) has biased composition (pro residues). An NR LBD domain is found at 360-595 (PPVSLISALV…AIIDKLFLDT (236 aa)). A nuclear export sequence (NES1) motif is present at residues 443–452 (FLELFVLRLA). The short motif at 568–577 (QGLQRIFYLK) is the nuclear export sequence (NES2) element.

Belongs to the nuclear hormone receptor family. In terms of assembly, interacts with SFPQ, NCOR2, SIN3A and HADC1. The interaction with NCOR2 increases in the absence of PITX3. Interacts with PER2.

The protein localises to the cytoplasm. Its subcellular location is the nucleus. In terms of biological role, transcriptional regulator which is important for the differentiation and maintenance of meso-diencephalic dopaminergic (mdDA) neurons during development. It is crucial for expression of a set of genes such as SLC6A3, SLC18A2, TH and DRD2 which are essential for development of mdDA neurons. This chain is Nuclear receptor subfamily 4 group A member 2 (NR4A2), found in Pongo abelii (Sumatran orangutan).